We begin with the raw amino-acid sequence, 741 residues long: Nuclear pore complex protein Nup88 (741 aa).

Residue Ala2 is modified to N-acetylalanine. Phosphoserine is present on residues Ser35, Ser50, Ser379, Ser437, Ser442, and Ser517. Thr525 carries the phosphothreonine modification. Ser540 is modified (phosphoserine). Residues 585–651 (EEIQRRVKLL…KLLHSFHSEL (67 aa)) are a coiled coil. Ser698 is subject to Phosphoserine.

In terms of assembly, interacts with NUP214/CAN. Interacts with NUP62 and NUP98. As to expression, ubiquitous.

It is found in the nucleus. The protein resides in the nuclear pore complex. Component of nuclear pore complex. In Homo sapiens (Human), this protein is Nuclear pore complex protein Nup88 (NUP88).